The sequence spans 260 residues: Phosphate import ATP-binding protein PstB (260 aa).

Positions 14 to 255 (VQVKNLAFYY…PRNKQTEDYI (242 aa)) constitute an ABC transporter domain. 46-53 (GPSGCGKS) provides a ligand contact to ATP.

This sequence belongs to the ABC transporter superfamily. Phosphate importer (TC 3.A.1.7) family. In terms of assembly, the complex is composed of two ATP-binding proteins (PstB), two transmembrane proteins (PstC and PstA) and a solute-binding protein (PstS).

It localises to the cell inner membrane. It catalyses the reaction phosphate(out) + ATP + H2O = ADP + 2 phosphate(in) + H(+). Part of the ABC transporter complex PstSACB involved in phosphate import. Responsible for energy coupling to the transport system. The sequence is that of Phosphate import ATP-binding protein PstB from Syntrophotalea carbinolica (strain DSM 2380 / NBRC 103641 / GraBd1) (Pelobacter carbinolicus).